We begin with the raw amino-acid sequence, 256 residues long: Ribonuclease 3-like protein 1 (256 aa).

The 147-residue stretch at 22–168 (AEVERALGGY…IVGAVYLDSK (147 aa)) folds into the RNase III domain. Mg(2+)-binding residues include E65, D154, and E157.

Requires Mg(2+) as cofactor. Mn(2+) serves as cofactor.

Cleaves double-stranded RNA (dsRNA). The protein is Ribonuclease 3-like protein 1 of Oryza sativa subsp. japonica (Rice).